An 80-amino-acid polypeptide reads, in one-letter code: SPbeta prophage-derived thioredoxin-like protein YosR (80 aa).

Residues 1–80 form the Thioredoxin domain; the sequence is MRLIKLEQPN…ELDELLKELR (80 aa). Cys11 and Cys14 are oxidised to a cystine.

This sequence belongs to the thioredoxin family.

In Bacillus subtilis (strain 168), this protein is SPbeta prophage-derived thioredoxin-like protein YosR (yosR).